Consider the following 358-residue polypeptide: Small ribosomal subunit biogenesis GTPase RsgA (358 aa).

The region spanning 76 to 234 (STEIDRPAVA…LADSPGFNQP (159 aa)) is the CP-type G domain. GTP is bound by residues 125-128 (NKID) and 176-184 (GPSGVGKSS). Positions 259, 264, 266, and 272 each coordinate Zn(2+). The tract at residues 319–358 (TYEPKLANKKYRRPSRRGKNQDQERYENKTLQDIYNDDSE) is disordered. Over residues 325–336 (ANKKYRRPSRRG) the composition is skewed to basic residues. The span at 337-348 (KNQDQERYENKT) shows a compositional bias: basic and acidic residues.

The protein belongs to the TRAFAC class YlqF/YawG GTPase family. RsgA subfamily. As to quaternary structure, monomer. Associates with 30S ribosomal subunit, binds 16S rRNA. The cofactor is Zn(2+).

The protein resides in the cytoplasm. In terms of biological role, one of several proteins that assist in the late maturation steps of the functional core of the 30S ribosomal subunit. Helps release RbfA from mature subunits. May play a role in the assembly of ribosomal proteins into the subunit. Circularly permuted GTPase that catalyzes slow GTP hydrolysis, GTPase activity is stimulated by the 30S ribosomal subunit. This Microcystis aeruginosa (strain NIES-843 / IAM M-2473) protein is Small ribosomal subunit biogenesis GTPase RsgA.